Consider the following 136-residue polypeptide: ATP synthase epsilon chain (136 aa).

This sequence belongs to the ATPase epsilon chain family. In terms of assembly, F-type ATPases have 2 components, CF(1) - the catalytic core - and CF(0) - the membrane proton channel. CF(1) has five subunits: alpha(3), beta(3), gamma(1), delta(1), epsilon(1). CF(0) has three main subunits: a, b and c.

Its subcellular location is the cell inner membrane. Produces ATP from ADP in the presence of a proton gradient across the membrane. The protein is ATP synthase epsilon chain of Myxococcus xanthus (strain DK1622).